A 203-amino-acid chain; its full sequence is A-type ATP synthase subunit E (203 aa).

It belongs to the V-ATPase E subunit family. As to quaternary structure, has multiple subunits with at least A(3), B(3), C, D, E, F, H, I and proteolipid K(x).

The protein localises to the cell membrane. In terms of biological role, component of the A-type ATP synthase that produces ATP from ADP in the presence of a proton gradient across the membrane. In Thermococcus onnurineus (strain NA1), this protein is A-type ATP synthase subunit E.